Consider the following 182-residue polypeptide: Adenylate kinase (182 aa).

Residue 12-17 (GAGKGT) coordinates ATP. The segment at 32–61 (STGDLLRAEVKAGSELGKEAEAVMNRGELV) is NMP. AMP-binding positions include Thr-33, Arg-38, 59–61 (ELV), 85–88 (GFPR), and Gln-92. Residues 126–132 (ARGRADD) are LID. Arg-127 contributes to the ATP binding site. AMP is bound by residues Arg-129 and Arg-140. Gly-168 is a binding site for ATP.

Belongs to the adenylate kinase family. Monomer.

It is found in the cytoplasm. The catalysed reaction is AMP + ATP = 2 ADP. Its pathway is purine metabolism; AMP biosynthesis via salvage pathway; AMP from ADP: step 1/1. Catalyzes the reversible transfer of the terminal phosphate group between ATP and AMP. Plays an important role in cellular energy homeostasis and in adenine nucleotide metabolism. The sequence is that of Adenylate kinase from Synechococcus sp. (strain RCC307).